An 880-amino-acid chain; its full sequence is Tyrosine-protein kinase receptor TYRO3 (880 aa).

Residues 1–30 (MALRRSMGRPGLRPLLLAGLASLLLPGSAA) form the signal peptide. 2 Ig-like C2-type domains span residues 31-118 (AGLK…TKIS) and 129-210 (PFFT…AIIR). Residues 31–419 (AGLKLMGAPV…QGPPHSRTSW (389 aa)) are Extracellular-facing. 8 N-linked (GlcNAc...) asparagine glycosylation sites follow: asparagine 53, asparagine 75, asparagine 181, asparagine 220, asparagine 230, asparagine 283, asparagine 356, and asparagine 370. 2 disulfide bridges follow: cysteine 54–cysteine 107 and cysteine 150–cysteine 193. 2 consecutive Fibronectin type-III domains span residues 217-310 (APFN…TKGL) and 315-406 (APQN…SHDH). Residues 420-440 (VPVVLGVLTALITAAALALIL) traverse the membrane as a helical segment. The Cytoplasmic segment spans residues 441 to 880 (LRKRRKETRF…QQGLLPHSSC (440 aa)). Serine 456 is subject to Phosphoserine. In terms of domain architecture, Protein kinase spans 508-785 (FTLGRMLGKG…LENILGHLSV (278 aa)). Residues 514–522 (LGKGEFGSV) and lysine 540 contribute to the ATP site. Catalysis depends on aspartate 645, which acts as the Proton acceptor. 4 positions are modified to phosphotyrosine; by autocatalysis: tyrosine 671, tyrosine 675, tyrosine 676, and tyrosine 794. Disordered regions lie at residues 804–827 (AENG…GSGM) and 842–864 (SPGG…LNEN). Residues serine 808 and serine 859 each carry the phosphoserine modification. Polar residues predominate over residues 852–864 (QLEQQPESPLNEN).

It belongs to the protein kinase superfamily. Tyr protein kinase family. AXL/UFO subfamily. Monomer and homodimer. Interacts (via N-terminus) with extracellular ligands TULP1 and GAS6. Interacts with PIK3R1; this interaction increases PI3-kinase activity. In terms of processing, autophosphorylated. Abundant in the brain and lower levels in other tissues.

The protein resides in the cell membrane. It catalyses the reaction L-tyrosyl-[protein] + ATP = O-phospho-L-tyrosyl-[protein] + ADP + H(+). In terms of biological role, receptor tyrosine kinase that transduces signals from the extracellular matrix into the cytoplasm by binding to several ligands including TULP1 or GAS6. Regulates many physiological processes including cell survival, migration and differentiation. Ligand binding at the cell surface induces dimerization and autophosphorylation of TYRO3 on its intracellular domain that provides docking sites for downstream signaling molecules. Following activation by ligand, interacts with PIK3R1 and thereby enhances PI3-kinase activity. Activates the AKT survival pathway, including nuclear translocation of NF-kappa-B and up-regulation of transcription of NF-kappa-B-regulated genes. TYRO3 signaling plays a role in various processes such as neuron protection from excitotoxic injury, platelet aggregation and cytoskeleton reorganization. Also plays an important role in inhibition of Toll-like receptors (TLRs)-mediated innate immune response by activating STAT1, which selectively induces production of suppressors of cytokine signaling SOCS1 and SOCS3. The polypeptide is Tyrosine-protein kinase receptor TYRO3 (Tyro3) (Rattus norvegicus (Rat)).